A 64-amino-acid polypeptide reads, in one-letter code: Large ribosomal subunit protein uL30 (64 aa).

In terms of assembly, part of the 50S ribosomal subunit. In terms of processing, the protein is methylated on either Ala-2 or Lys-3.

The polypeptide is Large ribosomal subunit protein uL30 (Rhodopseudomonas palustris (strain ATCC BAA-98 / CGA009)).